The sequence spans 118 residues: MTAKVLKRKIALRIKRKRRIRGKISGVATCPRVSIFKSNRTLYVQAIDDVTATTLAAVDGRKLGIKANKEGAVTLAKEFAKALKAKKIDVAIFDRNGYLYHGVIAAFAEALRENGIKL.

It belongs to the universal ribosomal protein uL18 family. In terms of assembly, part of the 50S ribosomal subunit; part of the 5S rRNA/L5/L18/L25 subcomplex. Contacts the 5S and 23S rRNAs.

In terms of biological role, this is one of the proteins that bind and probably mediate the attachment of the 5S RNA into the large ribosomal subunit, where it forms part of the central protuberance. This chain is Large ribosomal subunit protein uL18, found in Campylobacter concisus (strain 13826).